Reading from the N-terminus, the 392-residue chain is Ribonuclease D (392 aa).

Residues 12 to 178 (LIETTEALAA…PVYEGLRARL (167 aa)) form the 3'-5' exonuclease domain. In terms of domain architecture, HRDC spans 217–298 (NRRQLALVKA…ASTKAIPDAE (82 aa)).

Belongs to the RNase D family. The cofactor is a divalent metal cation.

It localises to the cytoplasm. It carries out the reaction Exonucleolytic cleavage that removes extra residues from the 3'-terminus of tRNA to produce 5'-mononucleotides.. Its function is as follows. Exonuclease involved in the 3' processing of various precursor tRNAs. Initiates hydrolysis at the 3'-terminus of an RNA molecule and releases 5'-mononucleotides. In Acidiphilium cryptum (strain JF-5), this protein is Ribonuclease D.